Reading from the N-terminus, the 496-residue chain is Probable G-protein coupled receptor Mth-like 5 (496 aa).

Topologically, residues 1–219 (MLVKTLGAHF…SNFLLRKILN (219 aa)) are extracellular. An N-linked (GlcNAc...) asparagine glycan is attached at Asn-82. The chain crosses the membrane as a helical span at residues 220–240 (PIFHGISLVILLVIAIIYFIL). At 241 to 246 (PTLRDL) the chain is on the cytoplasmic side. A helical transmembrane segment spans residues 247–267 (VGNIVTTIAMCLMVSQAADLV). Residues 268–276 (RIFTELTSH) lie on the Extracellular side of the membrane. Residues 277–297 (VSFIVADIILCFSLLAAFFWL) form a helical membrane-spanning segment. Over 298-327 (NSFGFYIWKTFRSRNVFLRVTDGRKYCYYS) the chain is Cytoplasmic. The helical transmembrane segment at 328–348 (AYAWGCTATMAALAVFAHFFL) threads the bilayer. Over 349-366 (DAESYKQEHMVGEQETIG) the chain is Extracellular. Residues 367 to 387 (WLGICIFFAPIACTILVNIFF) traverse the membrane as a helical segment. The Cytoplasmic segment spans residues 388–411 (YVTTRKLINRRTVYGRIAHKLKAN). Residues 412-432 (FIMFSLMLLVMSIAWLFLIMS) traverse the membrane as a helical segment. Over 433–438 (WLQMEG) the chain is Extracellular. The chain crosses the membrane as a helical span at residues 439 to 459 (LLYAHIVVNALQTPLLLYICV). At 460–496 (LRQRHVTFLLKKTCCYNEPPSANDWGDELHYMNGNDY) the chain is on the cytoplasmic side.

Belongs to the G-protein coupled receptor 2 family. Mth subfamily.

The protein resides in the cell membrane. This Drosophila melanogaster (Fruit fly) protein is Probable G-protein coupled receptor Mth-like 5 (mthl5).